The chain runs to 697 residues: uncharacterized protein (697 aa).

The stretch at 516–545 forms a coiled coil; that stretch reads ADQSQNDVVALSSRIDRLTQEVVALQNSEK.

This is an uncharacterized protein from Callospermophilus lateralis (Golden-mantled ground squirrel).